Reading from the N-terminus, the 89-residue chain is Acylphosphatase (89 aa).

The 86-residue stretch at 3 to 88 folds into the Acylphosphatase-like domain; that stretch reads TLHLQIEGRV…GEYSGFEKRS (86 aa). Residues R18 and N36 contribute to the active site.

It belongs to the acylphosphatase family.

The enzyme catalyses an acyl phosphate + H2O = a carboxylate + phosphate + H(+). This is Acylphosphatase (acyP) from Thiobacillus denitrificans (strain ATCC 25259 / T1).